Reading from the N-terminus, the 430-residue chain is MSGAEQQQIVPANNGDENWKAGLNLPAKDRRFKTADVTDTKGVEFEDFCLGRDLLMGIFEKGWEKPSPIQEASIGVALTGQDILARAKNGTGKTGAYCIPVIEKIQPALKAIQAMVIVPTRELALQTSQICVELSKHIQLKVMVTTGGTDLRDDIMRLNGTVHLVIATPGRILDLMEKGVAKMEHCKTLVLDEADKLLSQDFQGILDRLINFLPKERQVMLYSATFPNTVTSFMQKHMHKPYEINLMEELTLLGVTQYYAFVQEKQKVHCLNTLFRKLQINQSIIFCNSTQRVELLAKKITEIGYSCYYIHSKMAQNHRNRVFHDFRQGNCRNLVCSDLLTRGIDIQAVNVVINFDFPRNAETYLHRIGRSGRFGHLGVAINLITYEDRHTLRRIEQELRTRIEPIPKTVDPKLYVADQQLVDAADETTA.

The Q motif motif lies at 43-71 (VEFEDFCLGRDLLMGIFEKGWEKPSPIQE). The Helicase ATP-binding domain occupies 74-244 (IGVALTGQDI…QKHMHKPYEI (171 aa)). Position 87-94 (87-94 (AKNGTGKT)) interacts with ATP. A DEAD box motif is present at residues 192-195 (DEAD). One can recognise a Helicase C-terminal domain in the interval 254 to 414 (GVTQYYAFVQ…PIPKTVDPKL (161 aa)).

It belongs to the DEAD box helicase family. DDX6/DHH1 subfamily. Interacts with car-1 in a germline ribonucleoprotein complex. Interacts with ifet-1. Interacts with oma-1, which is a component of a ribonucleoprotein complex, in an RNA-dependent manner. In terms of tissue distribution, expression is restricted to two germline precursors Z2 and Z3 in L1 stage hermaphrodites, and is detectable specifically in the gonad at low levels into the L3 stage. Expression is significantly higher during the early L4 stage. In adults, expression remains gonad-specific and was not apparent in the somatically derived uterus. Expressed in germ granules (P granules); when associated with pgl-1.

The protein resides in the cytoplasm. The catalysed reaction is ATP + H2O = ADP + phosphate + H(+). In terms of biological role, probable RNA helicase required for oocyte and sperm function. Also required to prevent the physiological germline apoptosis mechanism killing essentially all developing oocytes. This Caenorhabditis elegans protein is ATP-dependent RNA helicase cgh-1 (cgh-1).